Consider the following 24-residue polypeptide: Caerulein precursor fragment B4 (24 aa).

As to expression, expressed by the skin glands.

The protein resides in the secreted. Functionally, has antibacterial and antifungal activity. This chain is Caerulein precursor fragment B4, found in Xenopus borealis (Kenyan clawed frog).